The sequence spans 223 residues: Small ribosomal subunit protein uS3 (223 aa).

Positions 38-106 (IKKYLKSKLA…EVHLNIVEIR (69 aa)) constitute a KH type-2 domain.

This sequence belongs to the universal ribosomal protein uS3 family. In terms of assembly, part of the 30S ribosomal subunit. Forms a tight complex with proteins S10 and S14.

In terms of biological role, binds the lower part of the 30S subunit head. Binds mRNA in the 70S ribosome, positioning it for translation. The chain is Small ribosomal subunit protein uS3 from Rhodospirillum rubrum (strain ATCC 11170 / ATH 1.1.1 / DSM 467 / LMG 4362 / NCIMB 8255 / S1).